The sequence spans 62 residues: Sec-independent protein translocase protein TatA (62 aa).

The chain crosses the membrane as a helical span at residues 10–32; sequence LLIILIIVIAIFGAGKLAGLGGA.

It belongs to the TatA/E family. Forms a complex with TatC.

It localises to the cell membrane. Its function is as follows. Part of the twin-arginine translocation (Tat) system that transports large folded proteins containing a characteristic twin-arginine motif in their signal peptide across membranes. TatA could form the protein-conducting channel of the Tat system. In Chloroflexus aurantiacus (strain ATCC 29366 / DSM 635 / J-10-fl), this protein is Sec-independent protein translocase protein TatA.